We begin with the raw amino-acid sequence, 369 residues long: Protein RIC-3 (369 aa).

Positions 1 to 28 (MAYSTVQRVALASGLVLALSLLLPKAFL) are cleaved as a signal peptide. The Lumenal segment spans residues 29–95 (SRGKRQEPPP…AGGGGSGRGL (67 aa)). The tract at residues 30 to 67 (RGKRQEPPPTPEGKLGRFPPMMHHHQAPSDGQTPGARF) is disordered. Residues 96–116 (MGQIIPIYGFGIFLYILYILF) traverse the membrane as a helical segment. Topologically, residues 117–369 (KLSKGKTTAE…LRKRNPQGLE (253 aa)) are cytoplasmic. A coiled-coil region spans residues 140 to 169 (RKITSFELAQLQEKLKETEAAMEKLINRVG). Residue K202 is modified to N6-acetyllysine; alternate. A Glycyl lysine isopeptide (Lys-Gly) (interchain with G-Cter in ubiquitin); alternate cross-link involves residue K202. Disordered stretches follow at residues 272–295 (ESDH…SVTS) and 316–369 (LAEN…QGLE). Residues 332 to 346 (ETTKEEWSQDFKDEG) are compositionally biased toward basic and acidic residues. Basic residues predominate over residues 360 to 369 (LRKRNPQGLE).

This sequence belongs to the ric-3 family. As to quaternary structure, monomer and homodimer. Interacts with CHRNA7, CHRNA3, CHRNA4, CHRNB2, CHRNB4 and HTR3A. As to expression, broadly expressed, with high levels in muscle, brain, heart, pancreas and testis. In the central nervous system, highest levels are detected in the cerebellum and pituitary gland. Over-expressed in brains from patients with bipolar disease or schizophrenia. Isoform 5 is predominantly expressed in the brain.

It localises to the endoplasmic reticulum membrane. It is found in the golgi apparatus membrane. Its function is as follows. Molecular chaperone which facilitates proper subunit assembly and surface trafficking of alpha-7 (CHRNA7) and alpha-8 (CHRNA8) nicotinic acetylcholine receptors. May also promote functional expression of homomeric serotoninergic 5-HT3 receptors, and of heteromeric acetylcholine receptors alpha-3/beta-2, alpha-3/beta-4, alpha-4/beta-2 and alpha-4/beta-4. In Homo sapiens (Human), this protein is Protein RIC-3 (RIC3).